The primary structure comprises 446 residues: Tektin-4 (446 aa).

Coiled coils occupy residues 182–215 (IRNV…MDYS), 297–346 (DAIA…NDKS), and 378–422 (SEVG…ANSI).

The protein belongs to the tektin family.

The protein resides in the cytoplasm. It is found in the cytoskeleton. The protein localises to the cilium axoneme. Its subcellular location is the cell projection. It localises to the cilium. The protein resides in the flagellum. Its function is as follows. Microtubule inner protein (MIP) part of the dynein-decorated doublet microtubules (DMTs) in cilia and flagellar axoneme. Forms filamentous polymers in the walls of ciliary and flagellar microtubules. Contributes to normal sperm motility. This Xenopus laevis (African clawed frog) protein is Tektin-4 (tekt4).